Reading from the N-terminus, the 195-residue chain is FMN-dependent NADH:quinone oxidoreductase (195 aa).

FMN-binding positions include serine 10, 16-18 (SQS), and 91-94 (MYNF).

It belongs to the azoreductase type 1 family. Homodimer. FMN is required as a cofactor.

It carries out the reaction 2 a quinone + NADH + H(+) = 2 a 1,4-benzosemiquinone + NAD(+). The catalysed reaction is N,N-dimethyl-1,4-phenylenediamine + anthranilate + 2 NAD(+) = 2-(4-dimethylaminophenyl)diazenylbenzoate + 2 NADH + 2 H(+). Functionally, quinone reductase that provides resistance to thiol-specific stress caused by electrophilic quinones. Its function is as follows. Also exhibits azoreductase activity. Catalyzes the reductive cleavage of the azo bond in aromatic azo compounds to the corresponding amines. This chain is FMN-dependent NADH:quinone oxidoreductase, found in Aeromonas salmonicida (strain A449).